The following is a 212-amino-acid chain: Small ribosomal subunit protein eS1 (212 aa).

Belongs to the eukaryotic ribosomal protein eS1 family.

This is Small ribosomal subunit protein eS1 from Haloquadratum walsbyi (strain DSM 16790 / HBSQ001).